The following is a 494-amino-acid chain: Sulfate adenylyltransferase subunit 1 (494 aa).

Residues 24–240 (TRPLRLITCG…LELATVRSAQ (217 aa)) enclose the tr-type G domain. The G1 stretch occupies residues 33-40 (GSVDDGKS). 33–40 (GSVDDGKS) contacts GTP. The interval 91–95 (GITID) is G2. The interval 112–115 (DTPG) is G3. GTP-binding positions include 112–116 (DTPGH) and 167–170 (NKID). The G4 stretch occupies residues 167–170 (NKID). The interval 204–206 (SAL) is G5.

The protein belongs to the TRAFAC class translation factor GTPase superfamily. Classic translation factor GTPase family. CysN/NodQ subfamily. In terms of assembly, heterodimer composed of CysD, the smaller subunit, and CysN.

The catalysed reaction is sulfate + ATP + H(+) = adenosine 5'-phosphosulfate + diphosphate. It functions in the pathway sulfur metabolism; hydrogen sulfide biosynthesis; sulfite from sulfate: step 1/3. Functionally, with CysD forms the ATP sulfurylase (ATPS) that catalyzes the adenylation of sulfate producing adenosine 5'-phosphosulfate (APS) and diphosphate, the first enzymatic step in sulfur assimilation pathway. APS synthesis involves the formation of a high-energy phosphoric-sulfuric acid anhydride bond driven by GTP hydrolysis by CysN coupled to ATP hydrolysis by CysD. The chain is Sulfate adenylyltransferase subunit 1 from Rhizobium tropici.